A 224-amino-acid polypeptide reads, in one-letter code: ATP synthase subunit a (224 aa).

Helical transmembrane passes span 17-37 (FSLNWLSTFLGLLMIPSIYWL), 72-92 (IFISLFSLILFNNFMGLFPYI), 99-119 (LTLTLSLALPLWLCFMLYGWI), 125-145 (MFAHLVPQGTPAILMPFMVCI), 166-186 (IAGHLLLTLLGNTGPSMSYIL), and 187-207 (VTFLLMAQIALLVLESAVAMI).

It belongs to the ATPase A chain family. F-type ATPases have 2 components, CF(1) - the catalytic core - and CF(0) - the membrane proton channel. CF(1) has five subunits: alpha(3), beta(3), gamma(1), delta(1), epsilon(1). CF(0) has three main subunits: a, b and c.

It localises to the mitochondrion inner membrane. Mitochondrial membrane ATP synthase (F(1)F(0) ATP synthase or Complex V) produces ATP from ADP in the presence of a proton gradient across the membrane which is generated by electron transport complexes of the respiratory chain. F-type ATPases consist of two structural domains, F(1) - containing the extramembraneous catalytic core and F(0) - containing the membrane proton channel, linked together by a central stalk and a peripheral stalk. During catalysis, ATP synthesis in the catalytic domain of F(1) is coupled via a rotary mechanism of the central stalk subunits to proton translocation. Key component of the proton channel; it may play a direct role in the translocation of protons across the membrane. This chain is ATP synthase subunit a (mt:ATPase6), found in Drosophila melanogaster (Fruit fly).